The primary structure comprises 192 residues: Apoptosis regulator BAX (192 aa).

Methionine 1 bears the N-acetylmethionine mark. Residues 59 to 73 (LSECLKRIGDELDSN) carry the BH3 motif. Positions 98 to 118 (DMFSDGNFNWGRVVALFYFAS) match the BH1 motif. Lysine 128 participates in a covalent cross-link: Glycyl lysine isopeptide (Lys-Gly) (interchain with G-Cter in ubiquitin). The BH2 signature appears at 150-165 (GWIQDQGGWDGLLSYF). The helical transmembrane segment at 172-192 (TVTIFVAGVLTASLTIWKKMG) threads the bilayer. A Glycyl lysine isopeptide (Lys-Gly) (interchain with G-Cter in ubiquitin) cross-link involves residue lysine 190.

It belongs to the Bcl-2 family. Homodimer. Forms higher oligomers under stress conditions. Forms heterooligomers with BAK. Interacts with BCL2L11. Interaction with BCL2L11 promotes BAX oligomerization and association with mitochondrial membranes, with subsequent release of cytochrome c. Forms heterodimers with BCL2, BCL2L1 isoform Bcl-X(L), BCL2L2, MCL1 and A1. Interacts with SH3GLB1. Interacts with humanin; forms fibers with humanin which results in BAX conformational changes and sequestering of BAX into the fibers, preventing BAX activation. Interacts with SFN and YWHAZ; the interaction occurs in the cytoplasm. Under stress conditions, JNK-mediated phosphorylation of SFN and YWHAZ, releases BAX to mitochondria. Interacts with RNF144B, which regulates the ubiquitin-dependent stability of BAX. Interacts with CLU under stress conditions that cause a conformation change leading to BAX oligomerization and association with mitochondria. Does not interact with CLU in unstressed cells. Interacts with FAIM2/LFG2. Interacts with RTL10/BOP. Interacts (via a C-terminal 33 residues) with NOL3 (via CARD domain); inhibits BAX activation and translocation and consequently cytochrome c release from mitochondria. Interacts with GIMAP3/IAN4 and GIMAP5/IAN5; this interaction is increased, when cells initiate apoptosis upon IL2 withdrawal. Interacts with IRF3; the interaction is direct, increases upon Sendai virus infection and mediates the formation of the apoptosis complex TOMM70:HSP90AA1:IRF3:BAX. Interacts with MOAP1, facilitating BAX-dependent mitochondrial outer membrane permeabilization and apoptosis. Interacts with BCL2L10/BCL-B. Interacts with non-acetylated XRCC6/Ku70; this interaction leads to BAX sequestration in the cytosol, away from the mitochondria, preventing BAX-mediated apoptosis. In terms of assembly, interacts with BCL2A1 and BCL2L1 isoform Bcl-X(L). As to quaternary structure, (Microbial infection) Interacts with adenovirus E1B 19K protein; this interaction blocks BAX oligomerization. (Microbial infection) Interacts with human cytomegalovirus/HHV-5 protein vMIA/UL37. In terms of assembly, (Microbial infection) Interacts with enterovirus protein 2B; this interaction activates BAX-induced apoptosis. Ubiquitinated in the absence of XRCC6/Ku70. Ubiquitination promotes protein degradation. Ubiquitinated on Lys-128 and Lys-190. 'Lys-63'-linked polyubiquitin chains on Lys-128 are removed by USP12. In terms of tissue distribution, expressed in a wide variety of tissues. Isoform Psi is found in glial tumors. Isoform Alpha is expressed in spleen, breast, ovary, testis, colon and brain, and at low levels in skin and lung. Isoform Sigma is expressed in spleen, breast, ovary, testis, lung, colon, brain and at low levels in skin. Isoform Alpha and isoform Sigma are expressed in pro-myelocytic leukemia, histiocytic lymphoma, Burkitt's lymphoma, T-cell lymphoma, lymphoblastic leukemia, breast adenocarcinoma, ovary adenocarcinoma, prostate carcinoma, prostate adenocarcinoma, lung carcinoma, epidermoid carcinoma, small cell lung carcinoma and colon adenocarcinoma cell lines.

The protein resides in the mitochondrion outer membrane. It localises to the cytoplasm. It is found in the nucleus. Its function is as follows. Plays a role in the mitochondrial apoptotic process. Under normal conditions, BAX is largely cytosolic via constant retrotranslocation from mitochondria to the cytosol mediated by BCL2L1/Bcl-xL, which avoids accumulation of toxic BAX levels at the mitochondrial outer membrane (MOM). Under stress conditions, undergoes a conformation change that causes translocation to the mitochondrion membrane, leading to the release of cytochrome c that then triggers apoptosis. Promotes activation of CASP3, and thereby apoptosis. The sequence is that of Apoptosis regulator BAX (BAX) from Homo sapiens (Human).